A 388-amino-acid polypeptide reads, in one-letter code: Succinate--CoA ligase [ADP-forming] subunit beta (388 aa).

The 236-residue stretch at 9–244 (KEILRKYNVP…LDEEDANEIE (236 aa)) folds into the ATP-grasp domain. ATP contacts are provided by residues Lys46, 53 to 55 (GRG), Glu99, Ala102, and Glu107. Mg(2+) is bound by residues Asn199 and Asp213. Substrate contacts are provided by residues Asn264 and 321 to 323 (GIM).

The protein belongs to the succinate/malate CoA ligase beta subunit family. Heterotetramer of two alpha and two beta subunits. Requires Mg(2+) as cofactor.

The enzyme catalyses succinate + ATP + CoA = succinyl-CoA + ADP + phosphate. The catalysed reaction is GTP + succinate + CoA = succinyl-CoA + GDP + phosphate. It functions in the pathway carbohydrate metabolism; tricarboxylic acid cycle; succinate from succinyl-CoA (ligase route): step 1/1. Its function is as follows. Succinyl-CoA synthetase functions in the citric acid cycle (TCA), coupling the hydrolysis of succinyl-CoA to the synthesis of either ATP or GTP and thus represents the only step of substrate-level phosphorylation in the TCA. The beta subunit provides nucleotide specificity of the enzyme and binds the substrate succinate, while the binding sites for coenzyme A and phosphate are found in the alpha subunit. In Cupriavidus necator (strain ATCC 17699 / DSM 428 / KCTC 22496 / NCIMB 10442 / H16 / Stanier 337) (Ralstonia eutropha), this protein is Succinate--CoA ligase [ADP-forming] subunit beta.